The sequence spans 214 residues: Phosphoenolpyruvate guanylyltransferase (214 aa).

Phosphoenolpyruvate-binding residues include Thr148, Gly163, and Ser166.

The protein belongs to the CofC family.

It catalyses the reaction phosphoenolpyruvate + GTP + H(+) = enolpyruvoyl-2-diphospho-5'-guanosine + diphosphate. It functions in the pathway cofactor biosynthesis; coenzyme F420 biosynthesis. Functionally, guanylyltransferase that catalyzes the activation of phosphoenolpyruvate (PEP) as enolpyruvoyl-2-diphospho-5'-guanosine, via the condensation of PEP with GTP. It is involved in the biosynthesis of coenzyme F420, a hydride carrier cofactor. This is Phosphoenolpyruvate guanylyltransferase from Mycobacterium tuberculosis (strain KZN 1435 / MDR).